A 366-amino-acid chain; its full sequence is Geranylgeranyl pyrophosphate synthase, chloroplastic/chromoplastic (366 aa).

Residues 44–65 (KRTVSSSSSSSLITKEDNNLKS) are disordered. Residues lysine 112, arginine 115, and histidine 144 each contribute to the isopentenyl diphosphate site. Positions 151 and 157 each coordinate Mg(2+). Arginine 162 serves as a coordination point for dimethylallyl diphosphate. Arginine 163 serves as a coordination point for isopentenyl diphosphate. Dimethylallyl diphosphate contacts are provided by lysine 251, threonine 252, glutamine 289, lysine 306, and lysine 316.

The protein belongs to the FPP/GGPP synthase family. In terms of assembly, dimer. Mg(2+) serves as cofactor.

It is found in the plastid. Its subcellular location is the chloroplast stroma. The protein localises to the chromoplast. It catalyses the reaction isopentenyl diphosphate + dimethylallyl diphosphate = (2E)-geranyl diphosphate + diphosphate. The enzyme catalyses isopentenyl diphosphate + (2E)-geranyl diphosphate = (2E,6E)-farnesyl diphosphate + diphosphate. It carries out the reaction isopentenyl diphosphate + (2E,6E)-farnesyl diphosphate = (2E,6E,10E)-geranylgeranyl diphosphate + diphosphate. It functions in the pathway isoprenoid biosynthesis; farnesyl diphosphate biosynthesis; farnesyl diphosphate from geranyl diphosphate and isopentenyl diphosphate: step 1/1. Its pathway is isoprenoid biosynthesis; geranyl diphosphate biosynthesis; geranyl diphosphate from dimethylallyl diphosphate and isopentenyl diphosphate: step 1/1. The protein operates within isoprenoid biosynthesis; geranylgeranyl diphosphate biosynthesis; geranylgeranyl diphosphate from farnesyl diphosphate and isopentenyl diphosphate: step 1/1. Catalyzes the trans-addition of the three molecules of IPP onto DMAPP to form geranylgeranyl pyrophosphate. This is Geranylgeranyl pyrophosphate synthase, chloroplastic/chromoplastic (GGPS1) from Sinapis alba (White mustard).